The chain runs to 971 residues: GEM-interacting protein (971 aa).

Ser19 is subject to Phosphoserine. Disordered stretches follow at residues 41 to 79, 231 to 267, and 383 to 476; these read AGDP…PEGP, LRAR…AQAK, and DTKK…IENG. A compositionally biased stretch (basic and acidic residues) spans 44–56; the sequence is PVRREDLEPDKAD. Polar residues predominate over residues 59–69; that stretch reads TVVTEENSEAS. 6 positions are modified to phosphoserine: Ser75, Ser235, Ser238, Ser247, Ser436, and Ser440. In terms of domain architecture, F-BAR spans 85–348; that stretch reads EELDLRLIRT…CCVPFEPGQR (264 aa). The segment covering 458 to 471 has biased composition (acidic residues); that stretch reads SSDDFEERDPDLGD. Residues 492–536 form a Phorbol-ester/DAG-type zinc finger; that stretch reads THRLRRLRGPAKCRECEAFMVSGTECEECFLTCHKRCLETLLILC. One can recognise a Rho-GAP domain in the interval 553-756; that stretch reads LQLPRDFPEE…FLIVHYEQIF (204 aa). A Phosphothreonine modification is found at Thr659. The tract at residues 799-865 is disordered; it reads IALDSSPDPK…LGAQSRGHFS (67 aa). The span at 805 to 817 shows a compositional bias: basic and acidic residues; that stretch reads PDPKHHSALEKCP. Phosphoserine is present on residues Ser884, Ser908, and Ser924.

As to quaternary structure, interacts with GEM through its N-terminal.

Stimulates, in vitro and in vivo, the GTPase activity of RhoA. This is GEM-interacting protein (Gmip) from Mus musculus (Mouse).